A 629-amino-acid polypeptide reads, in one-letter code: Plastin-1 (629 aa).

N-acetylmethionine is present on M1. 2 EF-hand domains span residues 11-46 and 51-86; these read EELEELQEAFNKIDIDNSGYVSDYELQDLFKEASLP and KVREIVEKILSVADSNKDGKISFEEFVSLMQELKSK. D24, D26, S28, Y30, E35, D64, N66, D68, K70, and E75 together coordinate Ca(2+). Actin-binding regions lie at residues 108-380 and 381-625; these read TSTI…CLHK and PNNN…GKGL. 4 Calponin-homology (CH) domains span residues 122 to 238, 266 to 376, 395 to 504, and 516 to 625; these read EEEK…KVGL, LSPE…NTYP, SKEE…RRYT, and KVND…GKGL.

Monomer. Phosphorylated. In terms of tissue distribution, in small intestine, colon, and kidney; relatively lower levels of expression are detected in the lung and stomach.

The protein resides in the cytoplasm. Its subcellular location is the cell projection. It localises to the stereocilium. Its function is as follows. Actin-bundling protein. In the inner ear, it is required for stereocilia formation. Mediates liquid packing of actin filaments that is necessary for stereocilia to grow to their proper dimensions. In Homo sapiens (Human), this protein is Plastin-1 (PLS1).